Reading from the N-terminus, the 86-residue chain is uncharacterized protein (86 aa).

The protein to M.jannaschii MJ0526.1.

This is an uncharacterized protein from Methanothermobacter thermautotrophicus (strain ATCC 29096 / DSM 1053 / JCM 10044 / NBRC 100330 / Delta H) (Methanobacterium thermoautotrophicum).